We begin with the raw amino-acid sequence, 321 residues long: ATP phosphoribosyltransferase regulatory subunit (321 aa).

It belongs to the class-II aminoacyl-tRNA synthetase family. HisZ subfamily. Heteromultimer composed of HisG and HisZ subunits.

Its subcellular location is the cytoplasm. It participates in amino-acid biosynthesis; L-histidine biosynthesis; L-histidine from 5-phospho-alpha-D-ribose 1-diphosphate: step 1/9. Functionally, required for the first step of histidine biosynthesis. May allow the feedback regulation of ATP phosphoribosyltransferase activity by histidine. The protein is ATP phosphoribosyltransferase regulatory subunit of Thiobacillus denitrificans (strain ATCC 25259 / T1).